Reading from the N-terminus, the 1016-residue chain is MDMIDEAITEVVRKIERERSVIHGALSMKRLTQNQTVHQQLHSNIEESKKSIIYLEERLEKLKLRKNGVRKSNSEKPSVGIEKNPSFSTTKSAKSFSSTSSNIDSNLDLLNYDTPLTISKISFLLQQLEFKLSVEEQYRKGIEKMAKLYEREHDRRSIAEAEKKYVESAQKITLLKQALKRYHDLHIEIDEEDVPSTESRGNLNARRPQSGLLKITVGSLRNVTHSAGISKQTEMIVAIRAEDLERARTRPSRTDRFNETFEIDLEKTNEVEIVVYEKKNEKLLLPVGLLWIRLSDLVEKQRRKKVEQEVSDKGWVSADKMINQRLSIFLPSALNNISKPESTDRPNTASGNQSVSAWFSLEPMGQINLTMNFTKHNTRKRPMDAGLGRQGAIRQRKESVHEVYGHKFLQHQFYQIMRCALCGEFLKNAAGMQCIDCHYTCHKKCYPKVVTKCISKSSDSASSEYEKINHRIPHHFESHTNIGANWCCHCGYILPLGRKTARKCTECGITAHAQCVHLVPDFCGMSMEMANRVISEIRTTKIYKAQQHKQKSSHHKHHHHKKSKSSSSKHKENDKASVSITTTTTPSITPADPVPTSPKPLAIEPVKRKPVHAGNLEVTSVSDNKLGATVQVVEQKVDDKADALTKPPSLDAVKEPIPVPSVETSVVAQDLTHKAKRIGLEDFTFLSVLGKGNFGKVMLAELKSEKQLYAIKVLKKEFILENDEVESTKSEKRVFLVANRERHPFLVNLHSCFQTETRIYFVMDFVSGGDLMLHIQQEQFSRRRAQFYAAEVCLALKYFHDNGIIYRDLKLDNILLSPDGHVKVADYGLCKEDMWHDNTTATFCGTPEFMAPEILLEQQYTRSVDWWAFGVLIYQMLLGQSPFRGEDEEEIFDAILSDEPLYPIHMPRDSVSILQQLLTRDPKKRLGSGPNDAEDVMTHPFFSNINWDDIYHKRTQPPYIPSLNSPTDTKYFDEEFTRELPVLTPVNSILTKEMQQHFEGFSYSCEDDKPSTTDNA.

The REM-1 1 domain maps to 1 to 68 (MDMIDEAITE…LEKLKLRKNG (68 aa)). The disordered stretch occupies residues 68–101 (GVRKSNSEKPSVGIEKNPSFSTTKSAKSFSSTSS). The span at 86-101 (SFSTTKSAKSFSSTSS) shows a compositional bias: low complexity. The region spanning 111–188 (NYDTPLTISK…LKRYHDLHIE (78 aa)) is the REM-1 2 domain. In terms of domain architecture, C2 spans 195 to 307 (PSTESRGNLN…VEKQRRKKVE (113 aa)). 2 Phorbol-ester/DAG-type zinc fingers span residues 405-453 (GHKF…VTKC) and 473-523 (PHHF…PDFC). The disordered stretch occupies residues 543-602 (YKAQQHKQKSSHHKHHHHKKSKSSSSKHKENDKASVSITTTTTPSITPADPVPTSPKPLA). A compositionally biased stretch (basic residues) spans 546–568 (QQHKQKSSHHKHHHHKKSKSSSS). The span at 579 to 590 (SITTTTTPSITP) shows a compositional bias: low complexity. One can recognise a Protein kinase domain in the interval 683 to 942 (FTFLSVLGKG…AEDVMTHPFF (260 aa)). ATP contacts are provided by residues 689–697 (LGKGNFGKV) and Lys712. The active-site Proton acceptor is the Asp808. The 71-residue stretch at 943–1013 (SNINWDDIYH…SCEDDKPSTT (71 aa)) folds into the AGC-kinase C-terminal domain. Residue Thr984 is modified to Phosphothreonine.

The protein belongs to the protein kinase superfamily. AGC Ser/Thr protein kinase family. PKC subfamily. Interacts with rho2.

The catalysed reaction is L-seryl-[protein] + ATP = O-phospho-L-seryl-[protein] + ADP + H(+). It catalyses the reaction L-threonyl-[protein] + ATP = O-phospho-L-threonyl-[protein] + ADP + H(+). Its function is as follows. Involved in the control of the cell shape. Target of the inhibitor staurosporine. The chain is Protein kinase C-like 2 (pck2) from Schizosaccharomyces pombe (strain 972 / ATCC 24843) (Fission yeast).